A 210-amino-acid polypeptide reads, in one-letter code: Probable GTP-binding protein EngB (210 aa).

The region spanning 25 to 199 is the EngB-type G domain; it reads CGIEVAFAGR…RQKLDSWFSE (175 aa). GTP-binding positions include 33–40, 60–64, 78–81, 145–148, and 178–180; these read GRSNAGKS, GRTQL, DLPG, TKAD, and FSS. Ser-40 and Thr-62 together coordinate Mg(2+).

Belongs to the TRAFAC class TrmE-Era-EngA-EngB-Septin-like GTPase superfamily. EngB GTPase family. The cofactor is Mg(2+).

In terms of biological role, necessary for normal cell division and for the maintenance of normal septation. The sequence is that of Probable GTP-binding protein EngB from Salmonella paratyphi C (strain RKS4594).